Consider the following 508-residue polypeptide: Photosystem II CP47 reaction center protein (508 aa).

Helical transmembrane passes span 21-36 (SVHL…WAGS), 101-115 (IVLS…IWHW), 140-156 (GIHL…FGAF), 203-218 (IAAG…FHLT), 237-252 (VLSS…AFVV), and 457-472 (CFAL…HGAR).

The protein belongs to the PsbB/PsbC family. PsbB subfamily. In terms of assembly, PSII is composed of 1 copy each of membrane proteins PsbA, PsbB, PsbC, PsbD, PsbE, PsbF, PsbH, PsbI, PsbJ, PsbK, PsbL, PsbM, PsbT, PsbX, PsbY, PsbZ, Psb30/Ycf12, at least 3 peripheral proteins of the oxygen-evolving complex and a large number of cofactors. It forms dimeric complexes. Binds multiple chlorophylls. PSII binds additional chlorophylls, carotenoids and specific lipids. is required as a cofactor.

Its subcellular location is the plastid. It is found in the chloroplast thylakoid membrane. In terms of biological role, one of the components of the core complex of photosystem II (PSII). It binds chlorophyll and helps catalyze the primary light-induced photochemical processes of PSII. PSII is a light-driven water:plastoquinone oxidoreductase, using light energy to abstract electrons from H(2)O, generating O(2) and a proton gradient subsequently used for ATP formation. This Chlorokybus atmophyticus (Soil alga) protein is Photosystem II CP47 reaction center protein.